The sequence spans 475 residues: Adenosylhomocysteinase (475 aa).

Residues T63, D138, and E199 each contribute to the substrate site. 200–202 (TTT) serves as a coordination point for NAD(+). Residues K229 and D233 each coordinate substrate. NAD(+) contacts are provided by residues N234, 263 to 268 (GYGDVG), E286, N321, 342 to 344 (IGH), and N389.

It belongs to the adenosylhomocysteinase family. Requires NAD(+) as cofactor.

Its subcellular location is the cytoplasm. It carries out the reaction S-adenosyl-L-homocysteine + H2O = L-homocysteine + adenosine. It functions in the pathway amino-acid biosynthesis; L-homocysteine biosynthesis; L-homocysteine from S-adenosyl-L-homocysteine: step 1/1. Its function is as follows. May play a key role in the regulation of the intracellular concentration of adenosylhomocysteine. This Solibacter usitatus (strain Ellin6076) protein is Adenosylhomocysteinase.